Consider the following 371-residue polypeptide: Cytochrome b (371 aa).

Transmembrane regions (helical) follow at residues 25-45, 69-90, 105-125, and 170-190; these read FGSM…FLAV, WMMQ…YIHI, WLSG…GYVL, and FFAL…LHIM. Positions 75 and 89 each coordinate heme b. His174 and His188 together coordinate heme b. His193 lines the a ubiquinone pocket. The next 4 helical transmembrane spans lie at 218–238, 280–300, 312–332, and 339–358; these read YKDL…VSFL, LGGA…PFTH, IMQL…WAAT, and FTMI…IMNP.

This sequence belongs to the cytochrome b family. The cytochrome bc1 complex contains 3 respiratory subunits (MT-CYB, CYC1 and UQCRFS1), 2 core proteins (UQCRC1 and UQCRC2) and probably 6 low-molecular weight proteins. It depends on heme b as a cofactor.

The protein resides in the mitochondrion inner membrane. Component of the ubiquinol-cytochrome c reductase complex (complex III or cytochrome b-c1 complex) that is part of the mitochondrial respiratory chain. The b-c1 complex mediates electron transfer from ubiquinol to cytochrome c. Contributes to the generation of a proton gradient across the mitochondrial membrane that is then used for ATP synthesis. The polypeptide is Cytochrome b (MT-CYB) (Eryx miliaris (Desert sand boa)).